The chain runs to 392 residues: tRNA (guanine(6)-N2)-methyltransferase (392 aa).

Positions 73-183 (SAIPLLNHFS…DSELFVGVDT (111 aa)) constitute a THUMP domain. S-adenosyl-L-methionine contacts are provided by residues 199–203 (HPAHL), 230–232 (SGT), glutamate 275, 303–304 (DA), and asparagine 317.

This sequence belongs to the methyltransferase superfamily.

It localises to the cytoplasm. It carries out the reaction guanosine(6) in tRNA + S-adenosyl-L-methionine = N(2)-methylguanosine(6) in tRNA + S-adenosyl-L-homocysteine + H(+). Functionally, S-adenosyl-L-methionine-dependent methyltransferase that catalyzes the methylation of the guanosine nucleotide at position 6 (m2G6) in tRNA. This is tRNA (guanine(6)-N2)-methyltransferase from Archaeoglobus fulgidus (strain ATCC 49558 / DSM 4304 / JCM 9628 / NBRC 100126 / VC-16).